Consider the following 47-residue polypeptide: uncharacterized protein (47 aa).

The region spanning 2-47 is the ATP-cone domain; it reads LRVRKRDGRLEEFSRAKIVRTCLRAGASKKIAEKVAEELKRGYTMG.

This is an uncharacterized protein from Archaeoglobus fulgidus (strain ATCC 49558 / DSM 4304 / JCM 9628 / NBRC 100126 / VC-16).